Here is an 88-residue protein sequence, read N- to C-terminus: Small ribosomal subunit protein bS20 (88 aa).

The interval 1-23 (MANSPQAKKRARQNDKARAHNAS) is disordered.

It belongs to the bacterial ribosomal protein bS20 family.

In terms of biological role, binds directly to 16S ribosomal RNA. This Saccharophagus degradans (strain 2-40 / ATCC 43961 / DSM 17024) protein is Small ribosomal subunit protein bS20.